The following is a 165-amino-acid chain: Cyclic pyranopterin monophosphate synthase (165 aa).

Residues 76–78 (MCH) and 113–114 (IE) each bind substrate. D128 is a catalytic residue.

It belongs to the MoaC family. As to quaternary structure, homohexamer; trimer of dimers.

The catalysed reaction is (8S)-3',8-cyclo-7,8-dihydroguanosine 5'-triphosphate = cyclic pyranopterin phosphate + diphosphate. It functions in the pathway cofactor biosynthesis; molybdopterin biosynthesis. Its function is as follows. Catalyzes the conversion of (8S)-3',8-cyclo-7,8-dihydroguanosine 5'-triphosphate to cyclic pyranopterin monophosphate (cPMP). The protein is Cyclic pyranopterin monophosphate synthase of Limosilactobacillus fermentum (strain NBRC 3956 / LMG 18251) (Lactobacillus fermentum).